The chain runs to 571 residues: Proline--tRNA ligase (571 aa).

Belongs to the class-II aminoacyl-tRNA synthetase family. ProS type 1 subfamily. As to quaternary structure, homodimer.

The protein resides in the cytoplasm. It carries out the reaction tRNA(Pro) + L-proline + ATP = L-prolyl-tRNA(Pro) + AMP + diphosphate. Functionally, catalyzes the attachment of proline to tRNA(Pro) in a two-step reaction: proline is first activated by ATP to form Pro-AMP and then transferred to the acceptor end of tRNA(Pro). As ProRS can inadvertently accommodate and process non-cognate amino acids such as alanine and cysteine, to avoid such errors it has two additional distinct editing activities against alanine. One activity is designated as 'pretransfer' editing and involves the tRNA(Pro)-independent hydrolysis of activated Ala-AMP. The other activity is designated 'posttransfer' editing and involves deacylation of mischarged Ala-tRNA(Pro). The misacylated Cys-tRNA(Pro) is not edited by ProRS. The chain is Proline--tRNA ligase from Actinobacillus pleuropneumoniae serotype 3 (strain JL03).